The following is a 360-amino-acid chain: 3-isopropylmalate dehydrogenase (360 aa).

The segment covering 66-75 has biased composition (basic residues); it reads RCHPARRRRR. The interval 66-101 is disordered; it reads RCHPARRRRRSEMGRHRPGHPPGARPAENPFATGPV. R133 and D223 together coordinate substrate. Residues D223, D247, and D251 each coordinate Mg(2+).

Belongs to the isocitrate and isopropylmalate dehydrogenases family. LeuB type 1 subfamily. In terms of assembly, homodimer. Requires Mg(2+) as cofactor. It depends on Mn(2+) as a cofactor.

The protein resides in the cytoplasm. The enzyme catalyses (2R,3S)-3-isopropylmalate + NAD(+) = 4-methyl-2-oxopentanoate + CO2 + NADH. Its pathway is amino-acid biosynthesis; L-leucine biosynthesis; L-leucine from 3-methyl-2-oxobutanoate: step 3/4. Its function is as follows. Catalyzes the oxidation of 3-carboxy-2-hydroxy-4-methylpentanoate (3-isopropylmalate) to 3-carboxy-4-methyl-2-oxopentanoate. The product decarboxylates to 4-methyl-2 oxopentanoate. The chain is 3-isopropylmalate dehydrogenase (leuB) from Azotobacter vinelandii.